A 157-amino-acid polypeptide reads, in one-letter code: Endoribonuclease YbeY (157 aa).

Zn(2+) contacts are provided by histidine 114, histidine 118, and histidine 124.

Belongs to the endoribonuclease YbeY family. Zn(2+) serves as cofactor.

The protein resides in the cytoplasm. In terms of biological role, single strand-specific metallo-endoribonuclease involved in late-stage 70S ribosome quality control and in maturation of the 3' terminus of the 16S rRNA. This chain is Endoribonuclease YbeY, found in Yersinia pestis.